The chain runs to 297 residues: Bifunctional protein FolD 1 (297 aa).

NADP(+)-binding positions include 164 to 166 (GRS), Ser193, and Ile234.

Belongs to the tetrahydrofolate dehydrogenase/cyclohydrolase family. Homodimer.

It catalyses the reaction (6R)-5,10-methylene-5,6,7,8-tetrahydrofolate + NADP(+) = (6R)-5,10-methenyltetrahydrofolate + NADPH. The enzyme catalyses (6R)-5,10-methenyltetrahydrofolate + H2O = (6R)-10-formyltetrahydrofolate + H(+). It functions in the pathway one-carbon metabolism; tetrahydrofolate interconversion. Catalyzes the oxidation of 5,10-methylenetetrahydrofolate to 5,10-methenyltetrahydrofolate and then the hydrolysis of 5,10-methenyltetrahydrofolate to 10-formyltetrahydrofolate. In Haloarcula marismortui (strain ATCC 43049 / DSM 3752 / JCM 8966 / VKM B-1809) (Halobacterium marismortui), this protein is Bifunctional protein FolD 1.